The sequence spans 436 residues: Nicotinate phosphoribosyltransferase (436 aa).

His231 carries the phosphohistidine; by autocatalysis modification.

It belongs to the NAPRTase family. In terms of processing, transiently phosphorylated on a His residue during the reaction cycle. Phosphorylation strongly increases the affinity for substrates and increases the rate of nicotinate D-ribonucleotide production. Dephosphorylation regenerates the low-affinity form of the enzyme, leading to product release.

The enzyme catalyses nicotinate + 5-phospho-alpha-D-ribose 1-diphosphate + ATP + H2O = nicotinate beta-D-ribonucleotide + ADP + phosphate + diphosphate. Its pathway is cofactor biosynthesis; NAD(+) biosynthesis; nicotinate D-ribonucleotide from nicotinate: step 1/1. Catalyzes the synthesis of beta-nicotinate D-ribonucleotide from nicotinate and 5-phospho-D-ribose 1-phosphate at the expense of ATP. This chain is Nicotinate phosphoribosyltransferase, found in Vibrio campbellii (strain ATCC BAA-1116).